Reading from the N-terminus, the 73-residue chain is ATP synthase subunit 9, mitochondrial (73 aa).

The next 2 membrane-spanning stretches (helical) occupy residues 12–32 (VAAL…AALI) and 50–70 (ILGF…SFLL).

Belongs to the ATPase C chain family. In terms of assembly, F-type ATPases have 2 components, CF(1) - the catalytic core - and CF(0) - the membrane proton channel. CF(1) has five subunits: alpha(3), beta(3), gamma(1), delta(1), epsilon(1). CF(0) has three main subunits: a, b and c.

It localises to the mitochondrion inner membrane. Mitochondrial membrane ATP synthase (F(1)F(0) ATP synthase or Complex V) produces ATP from ADP in the presence of a proton gradient across the membrane which is generated by electron transport complexes of the respiratory chain. F-type ATPases consist of two structural domains, F(1) - containing the extramembraneous catalytic core and F(0) - containing the membrane proton channel, linked together by a central stalk and a peripheral stalk. During catalysis, ATP synthesis in the catalytic domain of F(1) is coupled via a rotary mechanism of the central stalk subunits to proton translocation. Part of the complex F(0) domain. A homomeric c-ring of probably 10 subunits is part of the complex rotary element. The chain is ATP synthase subunit 9, mitochondrial (ATP9) from Mycosarcoma maydis (Corn smut fungus).